The primary structure comprises 510 residues: 2,3-bisphosphoglycerate-independent phosphoglycerate mutase (510 aa).

Residues aspartate 16 and serine 66 each contribute to the Mn(2+) site. Serine 66 serves as the catalytic Phosphoserine intermediate. Substrate is bound by residues histidine 127, arginine 156–aspartate 157, arginine 186, arginine 192, arginine 257–arginine 260, and lysine 333. Positions 400, 404, 441, 442, and 460 each coordinate Mn(2+).

Belongs to the BPG-independent phosphoglycerate mutase family. As to quaternary structure, monomer. Requires Mn(2+) as cofactor.

The catalysed reaction is (2R)-2-phosphoglycerate = (2R)-3-phosphoglycerate. It participates in carbohydrate degradation; glycolysis; pyruvate from D-glyceraldehyde 3-phosphate: step 3/5. Its function is as follows. Catalyzes the interconversion of 2-phosphoglycerate and 3-phosphoglycerate. The sequence is that of 2,3-bisphosphoglycerate-independent phosphoglycerate mutase from Gluconobacter oxydans (strain 621H) (Gluconobacter suboxydans).